The chain runs to 849 residues: Neprilysin-1 (849 aa).

Residues 1 to 113 (MSQQHEATAA…LKESQQRRRL (113 aa)) lie on the Cytoplasmic side of the membrane. Positions 41 to 61 (QQQVQHQAPHQMQQQQQQQQQ) are enriched in low complexity. The interval 41–63 (QQQVQHQAPHQMQQQQQQQQQNK) is disordered. Residues 114–134 (LVLAIAFTVLGAAIGALAIYF) form a helical; Signal-anchor for type II membrane protein membrane-spanning segment. Topologically, residues 135–849 (ASVHQRCHLY…MNPAEKCSVW (715 aa)) are extracellular. The segment covering 146–155 (LEPDNDDRPN) has biased composition (basic and acidic residues). The disordered stretch occupies residues 146–167 (LEPDNDDRPNGRWNQDSGSAHE). The Peptidase M13 domain occupies 172–849 (ICMTQECVRT…MNPAEKCSVW (678 aa)). Intrachain disulfides connect C173-C178, C196-C834, C204-C794, C260-C512, and C721-C846. N309, N326, N393, N589, and N599 each carry an N-linked (GlcNAc...) asparagine glycan. Zn(2+) is bound at residue H684. E685 is a catalytic residue. H688 is a Zn(2+) binding site. A glycan (N-linked (GlcNAc...) asparagine) is linked at N709. Position 746 (E746) interacts with Zn(2+). The active-site Proton donor is D750. An N-linked (GlcNAc...) asparagine glycan is attached at N778.

This sequence belongs to the peptidase M13 family. Zn(2+) serves as cofactor. Expressed in the testicular tube, near and in the seminal vesicles. In adults and third-instar larvae, expressed in the midgut and in the mushroom bodies of the brain and neurons in the pars intercerebralis. Also expressed in neurons of the ventral ganglion and imaginal disks (wing and leg) of third-instar larvae. In stage 17 embryos, expressed in the peripheral nervous system, pharynx and midgut.

Its subcellular location is the cell membrane. It catalyses the reaction Preferential cleavage of polypeptides between hydrophobic residues, particularly with Phe or Tyr at P1'.. In terms of biological role, metalloendoprotease which functions in fertility and memory formation. Required in the dorsal paired medial neurons and alpha/beta mushroom body neurons for the proper formation of long-term and middle-term memories. Required in males to maximise egg-laying in female mates and is also required in females for their fertility. In Drosophila melanogaster (Fruit fly), this protein is Neprilysin-1.